A 248-amino-acid polypeptide reads, in one-letter code: Type III pantothenate kinase (248 aa).

8–15 (DAGNTRTK) lines the ATP pocket. Residues Y87 and 94-97 (GVDR) contribute to the substrate site. D96 functions as the Proton acceptor in the catalytic mechanism. Residue T119 coordinates ATP. Substrate is bound at residue T173.

This sequence belongs to the type III pantothenate kinase family. Homodimer. NH4(+) serves as cofactor. The cofactor is K(+).

The protein resides in the cytoplasm. It carries out the reaction (R)-pantothenate + ATP = (R)-4'-phosphopantothenate + ADP + H(+). The protein operates within cofactor biosynthesis; coenzyme A biosynthesis; CoA from (R)-pantothenate: step 1/5. Catalyzes the phosphorylation of pantothenate (Pan), the first step in CoA biosynthesis. This Methylobacillus flagellatus (strain ATCC 51484 / DSM 6875 / VKM B-1610 / KT) protein is Type III pantothenate kinase.